A 157-amino-acid chain; its full sequence is Transcriptional repressor NrdR (157 aa).

A zinc finger spans residues 3 to 34; it reads CPFCNTVDTKVIDSRLVSEGSQIKRRRQCAIC. In terms of domain architecture, ATP-cone spans 49–139; that stretch reads PRVIKNDDLL…VYRSFEDVRE (91 aa).

This sequence belongs to the NrdR family. Zn(2+) serves as cofactor.

Negatively regulates transcription of bacterial ribonucleotide reductase nrd genes and operons by binding to NrdR-boxes. The chain is Transcriptional repressor NrdR from Hamiltonella defensa subsp. Acyrthosiphon pisum (strain 5AT).